A 540-amino-acid chain; its full sequence is Probable pectinesterase/pectinesterase inhibitor 60 (540 aa).

The N-terminal stretch at 1–31 (MNIMMVQNISFLSLHLLLILLLCLRPLTTVA) is a signal peptide. Positions 32–185 (DGNSTNIDGW…SHLISNCLAV (154 aa)) are pectinesterase inhibitor 60. N-linked (GlcNAc...) asparagine glycosylation is found at Asn-34, Asn-91, Asn-95, Asn-120, Asn-161, and Asn-195. The interval 225–526 (NLVVAKDGSG…FSVGKFIAGT (302 aa)) is pectinesterase 60. Positions 302 and 332 each coordinate substrate. The Proton donor; for pectinesterase activity role is filled by Asp-355. A disulfide bridge connects residues Cys-369 and Cys-389. Asp-376 acts as the Nucleophile; for pectinesterase activity in catalysis. Residues Arg-444 and Trp-446 each contribute to the substrate site.

In the N-terminal section; belongs to the PMEI family. The protein in the C-terminal section; belongs to the pectinesterase family. Expressed in siliques.

The protein localises to the secreted. Its subcellular location is the cell wall. It catalyses the reaction [(1-&gt;4)-alpha-D-galacturonosyl methyl ester](n) + n H2O = [(1-&gt;4)-alpha-D-galacturonosyl](n) + n methanol + n H(+). It participates in glycan metabolism; pectin degradation; 2-dehydro-3-deoxy-D-gluconate from pectin: step 1/5. Functionally, acts in the modification of cell walls via demethylesterification of cell wall pectin. In Arabidopsis thaliana (Mouse-ear cress), this protein is Probable pectinesterase/pectinesterase inhibitor 60 (PME60).